The following is a 381-amino-acid chain: Alkanesulfonate monooxygenase (381 aa).

Belongs to the SsuD family. Homotetramer.

The catalysed reaction is an alkanesulfonate + FMNH2 + O2 = an aldehyde + FMN + sulfite + H2O + 2 H(+). In terms of biological role, catalyzes the desulfonation of aliphatic sulfonates. This Citrobacter koseri (strain ATCC BAA-895 / CDC 4225-83 / SGSC4696) protein is Alkanesulfonate monooxygenase.